The chain runs to 188 residues: MGLKPDKWIREKSLNEAMITPFCEGLVGEGVVSYGLSSYGYDIRVSDEFKIFTNINAEVVDPKDFNENNVVDFKGDICIVPPNSFALARTVEYFRMPKDTLAICLGKSTYARCGIIVNVTPFEPGFEGHITIEISNTTPLPAKIYANEGIAQVLFLEGDEQCETTYSDRKGKYQSQTGITLPRILKQQ.

Residue 107 to 112 participates in dCTP binding; that stretch reads KSTYAR. The active-site Proton donor/acceptor is the E133. The dCTP site is built by Q152, Y166, and Q176.

This sequence belongs to the dCTP deaminase family. As to quaternary structure, homotrimer.

The catalysed reaction is dCTP + H2O + H(+) = dUTP + NH4(+). Its pathway is pyrimidine metabolism; dUMP biosynthesis; dUMP from dCTP (dUTP route): step 1/2. In terms of biological role, catalyzes the deamination of dCTP to dUTP. The sequence is that of dCTP deaminase from Sulfurovum sp. (strain NBC37-1).